We begin with the raw amino-acid sequence, 269 residues long: GTP cyclohydrolase FolE2 (269 aa).

Belongs to the GTP cyclohydrolase IV family.

It carries out the reaction GTP + H2O = 7,8-dihydroneopterin 3'-triphosphate + formate + H(+). Its pathway is cofactor biosynthesis; 7,8-dihydroneopterin triphosphate biosynthesis; 7,8-dihydroneopterin triphosphate from GTP: step 1/1. In terms of biological role, converts GTP to 7,8-dihydroneopterin triphosphate. The sequence is that of GTP cyclohydrolase FolE2 from Burkholderia ambifaria (strain ATCC BAA-244 / DSM 16087 / CCUG 44356 / LMG 19182 / AMMD) (Burkholderia cepacia (strain AMMD)).